The chain runs to 353 residues: Photosystem II protein D1 (353 aa).

Residue T2 is modified to N-acetylthreonine. T2 is modified (phosphothreonine). Transmembrane regions (helical) follow at residues 29 to 46 (YIGW…TATS), 118 to 133 (HFFL…EWEL), and 142 to 156 (WIAV…AATA). Chlorophyll a is bound at residue H118. Y126 is a binding site for pheophytin a. Residues D170 and E189 each contribute to the [CaMn4O5] cluster site. Residues 197–218 (FHMLGVAGVFGGSLFSAMHGSL) form a helical membrane-spanning segment. Residue H198 participates in chlorophyll a binding. A quinone is bound by residues H215 and 264 to 265 (SF). H215 is a binding site for Fe cation. H272 serves as a coordination point for Fe cation. The chain crosses the membrane as a helical span at residues 274–288 (FLAAWPVVGIWFTAL). Positions 332, 333, 342, and 344 each coordinate [CaMn4O5] cluster. Positions 345 to 353 (SVEAPSVNA) are excised as a propeptide.

The protein belongs to the reaction center PufL/M/PsbA/D family. As to quaternary structure, PSII is composed of 1 copy each of membrane proteins PsbA, PsbB, PsbC, PsbD, PsbE, PsbF, PsbH, PsbI, PsbJ, PsbK, PsbL, PsbM, PsbT, PsbX, PsbY, PsbZ, Psb30/Ycf12, at least 3 peripheral proteins of the oxygen-evolving complex and a large number of cofactors. It forms dimeric complexes. Requires The D1/D2 heterodimer binds P680, chlorophylls that are the primary electron donor of PSII, and subsequent electron acceptors. It shares a non-heme iron and each subunit binds pheophytin, quinone, additional chlorophylls, carotenoids and lipids. D1 provides most of the ligands for the Mn4-Ca-O5 cluster of the oxygen-evolving complex (OEC). There is also a Cl(-1) ion associated with D1 and D2, which is required for oxygen evolution. The PSII complex binds additional chlorophylls, carotenoids and specific lipids. as cofactor. In terms of processing, the 9 C-terminal residues are removed, probably by CTPA (AC O04073); processing is essential to allow assembly of the oxygen-evolving complex and thus photosynthetic growth. Post-translationally, tyr-161 forms a radical intermediate that is referred to as redox-active TyrZ, YZ or Y-Z.

The protein resides in the plastid. The protein localises to the chloroplast thylakoid membrane. The enzyme catalyses 2 a plastoquinone + 4 hnu + 2 H2O = 2 a plastoquinol + O2. Its function is as follows. Photosystem II (PSII) is a light-driven water:plastoquinone oxidoreductase that uses light energy to abstract electrons from H(2)O, generating O(2) and a proton gradient subsequently used for ATP formation. It consists of a core antenna complex that captures photons, and an electron transfer chain that converts photonic excitation into a charge separation. The D1/D2 (PsbA/PsbD) reaction center heterodimer binds P680, the primary electron donor of PSII as well as several subsequent electron acceptors. The sequence is that of Photosystem II protein D1 from Tetradesmus obliquus (Green alga).